Here is a 105-residue protein sequence, read N- to C-terminus: SH3 domain-binding glutamic acid-rich-like protein 2 (105 aa).

An SH3-binding motif is present at residues 61-67 (KGNPLPP).

The protein belongs to the SH3BGR family.

The protein localises to the nucleus. The chain is SH3 domain-binding glutamic acid-rich-like protein 2 (sh3bgrl2) from Danio rerio (Zebrafish).